The following is a 714-amino-acid chain: Phenylalanine 2-monooxygenase precursor (714 aa).

Residues 1–15 (MGVTVIPRLLGLKDE) constitute a propeptide, removed in mature form; occupies the channel of the substrate amino acid from the outside of the protein to the interior flavin ring in the precursor. Residues G2, G68, and 95–96 (EA) contribute to the FAD site. Positions 108 to 109 (IK) are cleaved as a propeptide — linker peptide. FAD is bound by residues R120, 141–144 (GAMR), and V375. Residue R144 coordinates substrate. Y537 contacts substrate. Residues 652 to 653 (SD) and 660 to 662 (GWL) contribute to the FAD site. G660 is a substrate binding site.

This sequence belongs to the phenylalanine 2-monooxygenase family. In terms of assembly, heterotetramer composed of 2 alpha and 2 beta subunits. It depends on FAD as a cofactor. Post-translationally, proteolytically cleaved to yield the active enzyme. Cleavage of the linkage between the 2 subunits causes reshaping of the oxygen channel and the hydrophobic environment around the flavin ring. Removal of the prosequence causes opening of the amino acid channel.

It catalyses the reaction L-phenylalanine + O2 = 2-phenylacetamide + CO2 + H2O. In terms of biological role, catalyzes both oxygenative decarboxylation and oxidative deamination, depending on the substrate used. Has high activity for L-Phe and L-Tyr, but relatively low activities for L-Met and L-Trp. L-Phe is mainly oxygenated and L-Met is mainly oxidized. The sequence is that of Phenylalanine 2-monooxygenase precursor from Pseudomonas sp.